The chain runs to 246 residues: 1-(5-phosphoribosyl)-5-[(5-phosphoribosylamino)methylideneamino] imidazole-4-carboxamide isomerase (246 aa).

Residue aspartate 8 is the Proton acceptor of the active site. Aspartate 131 functions as the Proton donor in the catalytic mechanism.

The protein belongs to the HisA/HisF family.

The protein resides in the cytoplasm. It carries out the reaction 1-(5-phospho-beta-D-ribosyl)-5-[(5-phospho-beta-D-ribosylamino)methylideneamino]imidazole-4-carboxamide = 5-[(5-phospho-1-deoxy-D-ribulos-1-ylimino)methylamino]-1-(5-phospho-beta-D-ribosyl)imidazole-4-carboxamide. It participates in amino-acid biosynthesis; L-histidine biosynthesis; L-histidine from 5-phospho-alpha-D-ribose 1-diphosphate: step 4/9. In Bordetella petrii (strain ATCC BAA-461 / DSM 12804 / CCUG 43448), this protein is 1-(5-phosphoribosyl)-5-[(5-phosphoribosylamino)methylideneamino] imidazole-4-carboxamide isomerase.